A 478-amino-acid chain; its full sequence is Zinc metalloproteinase/disintegrin VMP-II (478 aa).

An N-terminal signal peptide occupies residues 1 to 20 (MIQVLLVTICLAVFPYQGSS). Residues 21–190 (IILESGNVND…KASQLNLTPE (170 aa)) constitute a propeptide that is removed on maturation. Positions 197–393 (RYIELVIVAD…HNPQCMLNEP (197 aa)) constitute a Peptidase M12B domain. 2 residues coordinate Ca(2+): Glu-200 and Asp-284. 3 disulfides stabilise this stretch: Cys-308/Cys-388, Cys-348/Cys-372, and Cys-350/Cys-355. His-333 contacts Zn(2+). Glu-334 is an active-site residue. 2 residues coordinate Zn(2+): His-337 and His-343. Residues Cys-388 and Asn-391 each coordinate Ca(2+). Positions 394–405 (LGTDTVSRNELL) are excised as a propeptide. Positions 414 to 478 (GSPANPCCDA…ADCPRNRFHA (65 aa)) constitute a Disintegrin domain. Disulfide bonds link Cys-420–Cys-443, Cys-434–Cys-440, Cys-439–Cys-464, and Cys-452–Cys-471. The Cell attachment site motif lies at 456–458 (RGD).

It belongs to the venom metalloproteinase (M12B) family. P-II subfamily. P-IIe sub-subfamily. As to quaternary structure, heterodimer; disulfide-linked (disintegrin). Zn(2+) serves as cofactor. Expressed by the venom gland.

It is found in the secreted. Functionally, impairs hemostasis in the envenomed animal. Its function is as follows. This recombinant protein inhibits ADP-induced platelet aggregation in whole human blood and this effect is concentration-dependent with an IC(50) of 34 nM. This Crotalus viridis viridis (Prairie rattlesnake) protein is Zinc metalloproteinase/disintegrin VMP-II.